We begin with the raw amino-acid sequence, 170 residues long: Adenine phosphoribosyltransferase (170 aa).

This sequence belongs to the purine/pyrimidine phosphoribosyltransferase family. Homodimer.

It is found in the cytoplasm. The catalysed reaction is AMP + diphosphate = 5-phospho-alpha-D-ribose 1-diphosphate + adenine. It functions in the pathway purine metabolism; AMP biosynthesis via salvage pathway; AMP from adenine: step 1/1. Functionally, catalyzes a salvage reaction resulting in the formation of AMP, that is energically less costly than de novo synthesis. The chain is Adenine phosphoribosyltransferase from Mycoplasma mycoides subsp. mycoides SC (strain CCUG 32753 / NCTC 10114 / PG1).